The sequence spans 411 residues: Eukaryotic initiation factor 4A-III (411 aa).

Residue Met1 is modified to N-acetylmethionine. The residue at position 2 (Ala2) is an N-acetylalanine; in Eukaryotic initiation factor 4A-III, N-terminally processed. A phosphoserine mark is found at Ser10 and Ser12. Lys19 participates in a covalent cross-link: Glycyl lysine isopeptide (Lys-Gly) (interchain with G-Cter in SUMO2). The Q motif motif lies at 38-66; it reads PTFDTMGLREDLLRGIYAYGFEKPSAIQQ. Residues Lys60, Gln65, and 85–90 each bind ATP; that span reads GTGKTA. The Helicase ATP-binding domain maps to 69 to 239; it reads IKQIIKGRDV…NKFMTDPIRI (171 aa). Lys124 is modified (N6-acetyllysine). A Glycyl lysine isopeptide (Lys-Gly) (interchain with G-Cter in SUMO2) cross-link involves residue Lys152. Thr163 bears the Phosphothreonine mark. Positions 187-190 match the DEAD box motif; that stretch reads DEAD. An N6-acetyllysine mark is found at Lys198 and Lys296. Residues 250–411 enclose the Helicase C-terminal domain; it reads GIKQFFVAVE…EMPMNVADLI (162 aa). Lys314 is covalently cross-linked (Glycyl lysine isopeptide (Lys-Gly) (interchain with G-Cter in SUMO2)). Lys321 is subject to N6-acetyllysine. Residues Asp342 and 367-371 contribute to the ATP site; that span reads RSGRY. Residues Lys374 and Lys382 each participate in a glycyl lysine isopeptide (Lys-Gly) (interchain with G-Cter in SUMO2) cross-link.

It belongs to the DEAD box helicase family. eIF4A subfamily. In terms of assembly, identified in the spliceosome C complex. Core component of the mRNA splicing-dependent exon junction complex (EJC); the core complex contains CASC3, EIF4A3, MAGOH or MAGOHB, and RBM8A. Interacts with CASC3, MAGOH, NXF1, RBM8A and ALYREF/THOC4. Component of the ALYREF/THOC4-EJC-RNA complex; in the complex interacts with MAGOH, RBM8A and THOC4 (via the WXHD motif); these interactions are likely specific to RNA-bound EJC. May interact with NOM1. Interacts with POLDIP3. Interacts with CWC22 and PRPF19 in an RNA-independent manner. Direct interaction with CWC22 is mediated by the helicase C-terminal domain. Full interaction with CWC22 occurs only when EIF4A3 is not part of the EJC and prevents EIF4A3 binding to RNA. Identified in a complex composed of the EJC core, UPF3B and UPF2. The EJC core can also interact with UPF3A (in vitro). Interacts with NCBP3. Interacts with NRDE2. Interacts with DHX34; the interaction is RNA-independent.

Its subcellular location is the nucleus. The protein resides in the nucleus speckle. The protein localises to the cytoplasm. It carries out the reaction ATP + H2O = ADP + phosphate + H(+). Its activity is regulated as follows. The ATPase activity is increased some 4-fold in the presence of RNA. In terms of biological role, ATP-dependent RNA helicase. Involved in pre-mRNA splicing as component of the spliceosome. Core component of the splicing-dependent multiprotein exon junction complex (EJC) deposited at splice junctions on mRNAs. The EJC is a dynamic structure consisting of core proteins and several peripheral nuclear and cytoplasmic associated factors that join the complex only transiently either during EJC assembly or during subsequent mRNA metabolism. The EJC marks the position of the exon-exon junction in the mature mRNA for the gene expression machinery and the core components remain bound to spliced mRNAs throughout all stages of mRNA metabolism thereby influencing downstream processes including nuclear mRNA export, subcellular mRNA localization, translation efficiency and nonsense-mediated mRNA decay (NMD). Its RNA-dependent ATPase and RNA-helicase activities are induced by CASC3, but abolished in presence of the MAGOH-RBM8A heterodimer, thereby trapping the ATP-bound EJC core onto spliced mRNA in a stable conformation. The inhibition of ATPase activity by the MAGOH-RBM8A heterodimer increases the RNA-binding affinity of the EJC. Involved in translational enhancement of spliced mRNAs after formation of the 80S ribosome complex. Binds spliced mRNA in sequence-independent manner, 20-24 nucleotides upstream of mRNA exon-exon junctions. Shows higher affinity for single-stranded RNA in an ATP-bound core EJC complex than after the ATP is hydrolyzed. Involved in the splicing modulation of BCL2L1/Bcl-X (and probably other apoptotic genes); specifically inhibits formation of proapoptotic isoforms; the function is different from the established EJC assembly. Involved in craniofacial development. The sequence is that of Eukaryotic initiation factor 4A-III (EIF4A3) from Bos taurus (Bovine).